A 677-amino-acid polypeptide reads, in one-letter code: Methionine--tRNA ligase (677 aa).

Residues 14 to 24 carry the 'HIGH' region motif; sequence PYANGAIHLGH. Cys145, Cys148, Cys158, and Cys161 together coordinate Zn(2+). Residues 330-334 carry the 'KMSKS' region motif; the sequence is KMSKS. Lys333 is an ATP binding site. Positions 576–677 constitute a tRNA-binding domain; sequence DFAKVDLRVA…EGALPGMRVM (102 aa).

This sequence belongs to the class-I aminoacyl-tRNA synthetase family. MetG type 1 subfamily. As to quaternary structure, homodimer. Requires Zn(2+) as cofactor.

It is found in the cytoplasm. It carries out the reaction tRNA(Met) + L-methionine + ATP = L-methionyl-tRNA(Met) + AMP + diphosphate. Functionally, is required not only for elongation of protein synthesis but also for the initiation of all mRNA translation through initiator tRNA(fMet) aminoacylation. This chain is Methionine--tRNA ligase, found in Saccharophagus degradans (strain 2-40 / ATCC 43961 / DSM 17024).